Reading from the N-terminus, the 83-residue chain is UPF0512 protein I (83 aa).

Belongs to the UPF0512 family.

The sequence is that of UPF0512 protein I from Dictyostelium discoideum (Social amoeba).